A 284-amino-acid polypeptide reads, in one-letter code: Tryptophan 2,3-dioxygenase (284 aa).

Residues 53–57 (FIVQH), Y115, and R119 each bind substrate. Residue H242 participates in heme binding. A substrate-binding site is contributed by T256.

This sequence belongs to the tryptophan 2,3-dioxygenase family. In terms of assembly, homotetramer. The cofactor is heme.

It carries out the reaction L-tryptophan + O2 = N-formyl-L-kynurenine. The protein operates within amino-acid degradation; L-tryptophan degradation via kynurenine pathway; L-kynurenine from L-tryptophan: step 1/2. Functionally, heme-dependent dioxygenase that catalyzes the oxidative cleavage of the L-tryptophan (L-Trp) pyrrole ring and converts L-tryptophan to N-formyl-L-kynurenine. Catalyzes the oxidative cleavage of the indole moiety. The polypeptide is Tryptophan 2,3-dioxygenase (Bordetella parapertussis (strain 12822 / ATCC BAA-587 / NCTC 13253)).